Reading from the N-terminus, the 174-residue chain is Methylated protein MJ0556 (174 aa).

2 CBS domains span residues 28 to 87 and 91 to 156; these read MISG…YLNV and MLKN…IIKE.

Methylated at an undetermined residue between Ser-2 and Asp-26.

The protein is Methylated protein MJ0556 of Methanocaldococcus jannaschii (strain ATCC 43067 / DSM 2661 / JAL-1 / JCM 10045 / NBRC 100440) (Methanococcus jannaschii).